The sequence spans 415 residues: MTQNSAENPFPVRAVAIRVAGWIDKLGAVWVEGQLAQITMRPDAKTVFMVLRDPAADMSLTVTCSRDLVLSAPVKLAEGVQVVVCGKPSFYTGRGTFSLRLSEIRAVGIGELLARIDRLRRLLDAEGLFDPRLKRPIPYLPNMIGLITGRASAAERDVTTVASARWPAARFAVRNVAVQGPNAVGQIVEALRELDRDPDVDVIVLARGGGSVEDLLPFSDETLCRAIAACRTPVVSAVGHEPDNPLCDLVVDLRAATPTDAAKKVVPDTAAEQRLIDDLRRRSAQALRNWVSREQRAVAQLRSRPVLADPMTMVSVRAEEVHRARSTLRRNLTLMVAAETERIGHLAARLATLGPAATLARGYAIVQTVAQTGPEGGSEPQVLRSVHDAPEGTKLRVRVADGALAAVSEGQTNGL.

It belongs to the XseA family. Heterooligomer composed of large and small subunits.

It is found in the cytoplasm. It carries out the reaction Exonucleolytic cleavage in either 5'- to 3'- or 3'- to 5'-direction to yield nucleoside 5'-phosphates.. Its function is as follows. Bidirectionally degrades single-stranded DNA into large acid-insoluble oligonucleotides, which are then degraded further into small acid-soluble oligonucleotides. This chain is Exodeoxyribonuclease 7 large subunit, found in Mycobacterium bovis (strain ATCC BAA-935 / AF2122/97).